The primary structure comprises 912 residues: Metabotropic glutamate receptor 4 (912 aa).

The first 32 residues, 1 to 32 (MSGKGGWAWWWARLPLCLLLSLYAPWVPSSLG), serve as a signal peptide directing secretion. Topologically, residues 33–587 (KPKGHPHMNS…IVKLEWDSPW (555 aa)) are extracellular. Cys-67 and Cys-109 are disulfide-bonded. N-linked (GlcNAc...) asparagine glycosylation occurs at Asn-98. Residues Ser-159, 180–182 (AST), and Tyr-230 contribute to the L-glutamate site. 7 cysteine pairs are disulfide-bonded: Cys-249–Cys-538, Cys-372–Cys-388, Cys-428–Cys-435, Cys-520–Cys-539, Cys-524–Cys-542, Cys-545–Cys-557, and Cys-560–Cys-573. A glycan (N-linked (GlcNAc...) asparagine) is linked at Asn-301. Position 312 (Asp-312) interacts with L-glutamate. Residue Lys-405 participates in L-glutamate binding. N-linked (GlcNAc...) asparagine glycosylation is found at Asn-454 and Asn-484. The N-linked (GlcNAc...) asparagine glycan is linked to Asn-569. A helical membrane pass occupies residues 588-610 (AVLPLFLAVVGIAATLFVVVTFV). Residues 611–624 (RYNDTPIVKASGRE) are Cytoplasmic-facing. Residues 625 to 645 (LSYVLLAGIFLCYATTFLMIA) form a helical membrane-spanning segment. The Extracellular portion of the chain corresponds to 646–656 (EPDLGTCSLRR). The chain crosses the membrane as a helical span at residues 657–675 (IFLGLGMSISYAALLTKTN). Over 676 to 699 (RIYRIFEQGKRSVSAPRFISPASQ) the chain is Cytoplasmic. Residues 700 to 720 (LAITFILISLQLLGICVWFVV) form a helical membrane-spanning segment. At 721-750 (DPSHSVVDFQDQRTLDPRFARGVLKCDISD) the chain is on the extracellular side. A helical membrane pass occupies residues 751 to 772 (LSLICLLGYSMLLMVTCTVYAI). The Cytoplasmic portion of the chain corresponds to 773–785 (KTRGVPETFNEAK). A helical transmembrane segment spans residues 786 to 808 (PIGFTMYTTCIVWLAFIPIFFGT). Over 809 to 821 (SQSADKLYIQTTT) the chain is Extracellular. The chain crosses the membrane as a helical span at residues 822-847 (LTVSVSLSASVSLGMLYMPKVYIILF). Topologically, residues 848–912 (HPEQNVPKRK…TYVTYTNHAI (65 aa)) are cytoplasmic.

The protein belongs to the G-protein coupled receptor 3 family. Interacts with PICK1. In terms of tissue distribution, is widely distributed in the CNS. Predominant expression is seen in the granule cells of the cerebellum.

It localises to the cell membrane. Its function is as follows. G-protein coupled receptor for glutamate. Ligand binding causes a conformation change that triggers signaling via guanine nucleotide-binding proteins (G proteins) and modulates the activity of down-stream effectors. Signaling inhibits adenylate cyclase activity. In Rattus norvegicus (Rat), this protein is Metabotropic glutamate receptor 4 (Grm4).